The sequence spans 316 residues: Biotin synthase (316 aa).

The Radical SAM core domain occupies 36-264 (FDNRITLCAI…TATLRICGGR (229 aa)). [4Fe-4S] cluster contacts are provided by Cys-53, Cys-57, and Cys-60. The [2Fe-2S] cluster site is built by Cys-129, Cys-189, and Arg-259.

This sequence belongs to the radical SAM superfamily. Biotin synthase family. In terms of assembly, homodimer. The cofactor is [4Fe-4S] cluster. It depends on [2Fe-2S] cluster as a cofactor.

It carries out the reaction (4R,5S)-dethiobiotin + (sulfur carrier)-SH + 2 reduced [2Fe-2S]-[ferredoxin] + 2 S-adenosyl-L-methionine = (sulfur carrier)-H + biotin + 2 5'-deoxyadenosine + 2 L-methionine + 2 oxidized [2Fe-2S]-[ferredoxin]. It participates in cofactor biosynthesis; biotin biosynthesis; biotin from 7,8-diaminononanoate: step 2/2. Catalyzes the conversion of dethiobiotin (DTB) to biotin by the insertion of a sulfur atom into dethiobiotin via a radical-based mechanism. The polypeptide is Biotin synthase (Desulfovibrio desulfuricans (strain ATCC 27774 / DSM 6949 / MB)).